A 280-amino-acid chain; its full sequence is Large ribosomal subunit protein uL2cz/uL2cy (280 aa).

Disordered regions lie at residues 1–25 and 231–280; these read MAIHLYKTSTPSTRNGAVDSQVKSN and PVDH…RRTK.

The protein belongs to the universal ribosomal protein uL2 family. Part of the 50S ribosomal subunit.

It is found in the plastid. It localises to the chloroplast. This is Large ribosomal subunit protein uL2cz/uL2cy (rpl2-A) from Platanus occidentalis (Sycamore).